A 240-amino-acid polypeptide reads, in one-letter code: uncharacterized protein (240 aa).

Residues 1-85 (MSGFIKSTLL…LCGCCCWTNT (85 aa)) are Cytoplasmic-facing. The helical transmembrane segment at 86 to 106 (IGWAPLLALLPVIGPLLMYWV) threads the bilayer. The Extracellular segment spans residues 107-131 (HDKLIELADDRYKLPAEIKVKMHGN). Residues 132–152 (IVIDLLISLVPILGSVFAWLH) form a helical membrane-spanning segment. Residues 153 to 240 (ACSTRNAAIV…TNGRPQRGYR (88 aa)) are Cytoplasmic-facing. A disordered region spans residues 181–240 (QKEENEKHSNANTAPPVVGGNKNVNGNRNNSKMYNRPPVTAPPAPAYTRSTNGRPQRGYR). A compositionally biased stretch (low complexity) spans 197-210 (VVGGNKNVNGNRNN).

The protein resides in the membrane. This is an uncharacterized protein from Saccharomyces cerevisiae (strain ATCC 204508 / S288c) (Baker's yeast).